The primary structure comprises 827 residues: Periplasmic nitrate reductase (827 aa).

The segment at residues 1 to 32 is a signal peptide (tat-type signal); that stretch reads MELNRRDFMKANAAMAAAAAAGMTIPVKNVYA. One can recognise a 4Fe-4S Mo/W bis-MGD-type domain in the interval 37–93; sequence IRWDKAPCRFCGTGCSVLVGTKDGRVVATQGDPDAEVNRGLNCIKGYFLSKIMYGAD. Positions 44, 47, 51, and 79 each coordinate [4Fe-4S] cluster. Residues Lys-81, Gln-148, Asn-173, Cys-177, 210–217, 241–245, Met-371, Gln-375, Asn-481, 507–508, Lys-530, Asp-557, and 717–726 contribute to the Mo-bis(molybdopterin guanine dinucleotide) site; these read WGSNMAEM, STFEH, SD, and TGRVLEHWHT. Residue Phe-793 coordinates substrate. 2 residues coordinate Mo-bis(molybdopterin guanine dinucleotide): Asn-801 and Lys-818.

Belongs to the prokaryotic molybdopterin-containing oxidoreductase family. NasA/NapA/NarB subfamily. Component of the periplasmic nitrate reductase NapAB complex composed of NapA and NapB. [4Fe-4S] cluster is required as a cofactor. Mo-bis(molybdopterin guanine dinucleotide) serves as cofactor. Post-translationally, predicted to be exported by the Tat system. The position of the signal peptide cleavage has not been experimentally proven.

It localises to the periplasm. The enzyme catalyses 2 Fe(II)-[cytochrome] + nitrate + 2 H(+) = 2 Fe(III)-[cytochrome] + nitrite + H2O. Functionally, catalytic subunit of the periplasmic nitrate reductase complex NapAB. Receives electrons from NapB and catalyzes the reduction of nitrate to nitrite. The chain is Periplasmic nitrate reductase from Actinobacillus pleuropneumoniae serotype 7 (strain AP76).